Here is a 1080-residue protein sequence, read N- to C-terminus: AP-4 complex subunit epsilon (1080 aa).

HEAT repeat units follow at residues 161–198 (DTIPAFLQKVLQLLNHQKPIVRKKSVTVLHRFYRLVGD), 201–238 (LDDDQIIDKLRQSLCDRDPSVMSASICIFLDISEKHST), 369–405 (QLIEQCSKNIAIFLKGKHHNLRYFGIKALASIVKVSP), 406–443 (KLVLPYQVEVIESLESPDETLKRKSFDLLYKMTNQTNV), and 445–479 (PVCSKLIEQLVLSKDQNFKSELISQITNIAEKYSP). 4 disordered regions span residues 711-782 (TPLV…FPQQ), 801-920 (NNNS…NIDP), 933-973 (FSEN…INNN), and 996-1027 (TNNSNNNNNNNNNNNNNNNNNNNNNNNNNNNL). 5 stretches are compositionally biased toward low complexity: residues 762-782 (QQQQQQQQQQQQQQLQLFPQQ), 801-847 (NNNS…PNNQ), 878-911 (NKQTPPQNATPQQQQQQQQQQTQNTLSQQQIQKH), 936-952 (NNNRNENSNNTDNNQNN), and 962-972 (KKSNNENNINN).

The protein belongs to the adaptor complexes large subunit family. In terms of assembly, may be part of the adaptor protein complex 4 (AP-4), a heterotetramer composed of two large adaptins (epsilon-type subunitand beta-type subunit), a medium adaptin (mu-type subunit) and a small adaptin (sigma-type).

It localises to the golgi apparatus. Its subcellular location is the trans-Golgi network membrane. In terms of biological role, probable component of an adaptor protein complex. Adaptor protein complexes are vesicle coat components involved both in vesicle formation and cargo selection. They control the vesicular transport of proteins in different trafficking pathways. The sequence is that of AP-4 complex subunit epsilon from Dictyostelium discoideum (Social amoeba).